We begin with the raw amino-acid sequence, 379 residues long: Homoserine O-succinyltransferase (379 aa).

Positions 51 to 360 constitute an AB hydrolase-1 domain; it reads NAVLICHALS…DAPQGHDAFL (310 aa). Ser157 serves as the catalytic Nucleophile. Arg227 lines the substrate pocket. Active-site residues include Asp323 and His356. A substrate-binding site is contributed by Asp357.

It belongs to the AB hydrolase superfamily. MetX family. Homodimer.

The protein resides in the cytoplasm. The enzyme catalyses L-homoserine + succinyl-CoA = O-succinyl-L-homoserine + CoA. The protein operates within amino-acid biosynthesis; L-methionine biosynthesis via de novo pathway; O-succinyl-L-homoserine from L-homoserine: step 1/1. With respect to regulation, requires MetW for activity. In terms of biological role, transfers a succinyl group from succinyl-CoA to L-homoserine, forming succinyl-L-homoserine. The protein is Homoserine O-succinyltransferase of Pseudomonas syringae pv. syringae (strain B728a).